The chain runs to 311 residues: Tricarboxylate transport protein, mitochondrial (311 aa).

The propeptide at 1-13 is removed in mature form; that stretch reads MAAARAPRALTSA. A compositionally biased stretch (low complexity) spans 1-15; sequence MAAARAPRALTSASP. The interval 1–22 is disordered; the sequence is MAAARAPRALTSASPGSGKAKL. 3 Solcar repeats span residues 23 to 111, 122 to 208, and 218 to 303; these read THPG…LSNH, TRGL…LRNW, and MNPL…VVKL. Transmembrane regions (helical) follow at residues 29–46, 86–105, and 129–143; these read ILAGGLAGGIEICITFPT, GLSSLLYGSIPKAAVRFGTF, and LGAGVPEAVVVVCPM. Residue Ser-156 is modified to Phosphoserine. The next 3 membrane-spanning stretches (helical) occupy residues 183–202, 224–241, and 278–297; these read GLTATVLKQGSNQGIRFFVM, GVFGAIAGAASVFGNTPL, and GTVPRLGRVCLDVAIVFIIY.

It belongs to the mitochondrial carrier (TC 2.A.29) family. Post-translationally, possesses a short cleavable presequence, which, however, is found to be dispensable both for targeting to mitochondria and insertion into the inner membrane. However, the presequence is required to keep SLC25A1 in a soluble state and thus in an import-competent state. Mature SLC25A1 lacking the presequence is prone to aggregation.

It is found in the mitochondrion inner membrane. The protein localises to the mitochondrion membrane. It carries out the reaction (S)-malate(in) + citrate(out) = (S)-malate(out) + citrate(in). The enzyme catalyses D-threo-isocitrate(in) + citrate(out) = D-threo-isocitrate(out) + citrate(in). The catalysed reaction is citrate(out) + succinate(in) = citrate(in) + succinate(out). It catalyses the reaction phosphoenolpyruvate(in) + citrate(out) = phosphoenolpyruvate(out) + citrate(in). It carries out the reaction cis-aconitate(in) + citrate(out) = cis-aconitate(out) + citrate(in). The enzyme catalyses trans-aconitate(in) + citrate(out) = trans-aconitate(out) + citrate(in). The catalysed reaction is maleate(in) + citrate(out) = maleate(out) + citrate(in). Its function is as follows. Mitochondrial electroneutral antiporter that exports citrate from the mitochondria into the cytosol in exchange for malate. Also able to mediate the exchange of citrate for isocitrate, phosphoenolpyruvate, cis-aconitate and to a lesser extent trans-aconitate, maleate and succinate. In the cytoplasm, citrate plays important roles in fatty acid and sterol synthesis, regulation of glycolysis, protein acetylation, and other physiopathological processes. This is Tricarboxylate transport protein, mitochondrial (SLC25A1) from Bos taurus (Bovine).